The sequence spans 256 residues: Acetyl-coenzyme A carboxylase carboxyl transferase subunit beta 2 (256 aa).

In terms of domain architecture, CoA carboxyltransferase N-terminal spans 1-256 (MTVKCNKCKE…LAIHAETVSA (256 aa)). Positions 5, 8, 24, and 27 each coordinate Zn(2+). A C4-type zinc finger spans residues 5 to 27 (CNKCKEEINKEDLEKNYYICPLC).

Belongs to the AccD/PCCB family. In terms of assembly, acetyl-CoA carboxylase is a heterohexamer composed of biotin carboxyl carrier protein (AccB), biotin carboxylase (AccC) and two subunits each of ACCase subunit alpha (AccA) and ACCase subunit beta (AccD). It depends on Zn(2+) as a cofactor.

It is found in the cytoplasm. It catalyses the reaction N(6)-carboxybiotinyl-L-lysyl-[protein] + acetyl-CoA = N(6)-biotinyl-L-lysyl-[protein] + malonyl-CoA. It participates in lipid metabolism; malonyl-CoA biosynthesis; malonyl-CoA from acetyl-CoA: step 1/1. Functionally, component of the acetyl coenzyme A carboxylase (ACC) complex. Biotin carboxylase (BC) catalyzes the carboxylation of biotin on its carrier protein (BCCP) and then the CO(2) group is transferred by the transcarboxylase to acetyl-CoA to form malonyl-CoA. The protein is Acetyl-coenzyme A carboxylase carboxyl transferase subunit beta 2 of Lachnospira eligens (strain ATCC 27750 / DSM 3376 / VPI C15-48 / C15-B4) (Eubacterium eligens).